A 263-amino-acid chain; its full sequence is Alpha-tubulin N-acetyltransferase 2 (263 aa).

The 181-residue stretch at 1–181 folds into the N-acetyltransferase domain; the sequence is MEIAFDLSSI…NKYAVFPNFF (181 aa). 115–128 is an acetyl-CoA binding site; that stretch reads FFIVPTEQRSGNGF. Disordered stretches follow at residues 191–224 and 236–263; these read TPRQ…RPRH and FPRG…EPIW. A compositionally biased stretch (low complexity) spans 200–212; the sequence is RASSAVSSHTTSR. The span at 253–263 shows a compositional bias: basic and acidic residues; it reads LTRDQRHEPIW.

It belongs to the acetyltransferase ATAT1 family.

It catalyses the reaction L-lysyl-[alpha-tubulin] + acetyl-CoA = N(6)-acetyl-L-lysyl-[alpha-tubulin] + CoA + H(+). Specifically acetylates 'Lys-40' in alpha-tubulin/mec-12 on the lumenal side of microtubules. Promotes microtubule destabilization and accelerates microtubule dynamics; this activity may be independent of acetylation activity. Acetylates alpha-tubulin with a slow enzymatic rate, due to a catalytic site that is not optimized for acetyl transfer. Enters the microtubule through each end and diffuses quickly throughout the lumen of microtubules. Acetylates only long/old microtubules because of its slow acetylation rate since it does not have time to act on dynamically unstable microtubules before the enzyme is released. Required for the maintenance of touch receptor neurons and possibly other type of neurons involved in locomotion. The protein is Alpha-tubulin N-acetyltransferase 2 (atat-2) of Caenorhabditis briggsae.